A 96-amino-acid polypeptide reads, in one-letter code: Large ribosomal subunit protein eL43 (96 aa).

Residues Cys-41, Cys-44, Cys-59, and Cys-62 each coordinate Zn(2+). The C4-type zinc finger occupies 41–62 (CPVCAFPKLKRAGTSIWVCEKC).

The protein belongs to the eukaryotic ribosomal protein eL43 family. Putative zinc-binding subfamily. Part of the 50S ribosomal subunit. It depends on Zn(2+) as a cofactor.

Its function is as follows. Binds to the 23S rRNA. This is Large ribosomal subunit protein eL43 from Methanococcus maripaludis (strain DSM 14266 / JCM 13030 / NBRC 101832 / S2 / LL).